Reading from the N-terminus, the 7260-residue chain is Nonribosomal peptide synthetase ecdA (7260 aa).

Residues 4-80 enclose the Carrier 1 domain; sequence TNEMERKRVF…ELFETIQYLQ (77 aa). An O-(pantetheine 4'-phosphoryl)serine modification is found at S41. Positions 134 to 549 are condensation 1; it reads EDVYPSTPLQ…SINEILTLPA (416 aa). Residues 575 to 965 form an adenylation 1 region; it reads QDQVRSQPAA…DGSLLYVGRC (391 aa). In terms of domain architecture, Carrier 2 spans 1090 to 1166; it reads APSTAIEHKL…DLARELEGRN (77 aa). Position 1127 is an O-(pantetheine 4'-phosphoryl)serine (S1127). A condensation 2 region spans residues 1208–1628; that stretch reads EDIIPCTAMQ…LGDLSLLSAD (421 aa). Residues 1653–2054 form an adenylation 2 region; the sequence is EEQITARPDS…GRRDTQIKIR (402 aa). Residues 2188 to 2264 form the Carrier 3 domain; the sequence is TPSTPTESQL…DLANLLSSRF (77 aa). S2225 is modified (O-(pantetheine 4'-phosphoryl)serine). Residues 2314 to 2719 are condensation 3; it reads QDVYPCTPLQ…THVVQQLCDP (406 aa). The segment at 2763–3156 is adenylation 3; it reads KQALAQPNAP…GRRDTQVKIR (394 aa). The Carrier 4 domain occupies 3287–3365; that stretch reads QPATEMEKML…ELAQVLEERV (79 aa). Position 3324 is an O-(pantetheine 4'-phosphoryl)serine (S3324). Residues 3417–3831 are condensation 4; the sequence is VQDVYPCTPL…LLSPNDQQQI (415 aa). Positions 3851 to 4248 are adenylation 4; sequence EEQAMAHPTK…SFVYVARRNT (398 aa). In terms of domain architecture, Carrier 5 spans 4394-4471; sequence APATAMERTL…DLANLLADGA (78 aa). S4431 carries the O-(pantetheine 4'-phosphoryl)serine modification. The condensation 5 stretch occupies residues 4510–4910; it reads EDIYPATPLQ…HFVHVAEQLF (401 aa). The segment at 4955 to 5357 is adenylation 5; the sequence is ERAALQPNAP…GRRDLQVKIR (403 aa). The Carrier 6 domain occupies 5496-5573; the sequence is APRTVMEQQV…DLALVLSERG (78 aa). S5533 carries the post-translational modification O-(pantetheine 4'-phosphoryl)serine. The interval 5622-6043 is condensation 6; the sequence is EDVYPCTPLQ…AVSEKDERQI (422 aa). Positions 6063 to 6460 are adenylation 6; the sequence is QEQVARTPGE…GRHDSQVKIR (398 aa). Residues 6592–6668 enclose the Carrier 7 domain; that stretch reads APSTAMERQL…EVAQVVEDRV (77 aa). Position 6629 is an O-(pantetheine 4'-phosphoryl)serine (S6629). A condensation 7 region spans residues 6718 to 7133; sequence LPTTDFQALT…ILDSPGLLVS (416 aa). The tract at residues 7241–7260 is disordered; the sequence is CEEAEKSASVTSSERRLATI.

Belongs to the NRP synthetase family.

It functions in the pathway antifungal biosynthesis. In terms of biological role, nonribosomal peptide synthetase; part of the gene cluster that mediates the biosynthesis of echinocandin B, a fungal lipidated cyclic hexapeptide that acts as an antifungal agent. Linoleoyl-AMP, produced by the fatty-acyl-AMP ligase ecdI, is transferred to the initiation carrier domain (T0) of ecdA. The linoleoyl-S-phosphopantetheinyl-T0 is sequentially extended with L-ornithine, L-threonine, L-proline, L-homotyrosine, L-threonine, and 4R-methyl-L-proline to form the linear hexapeptide. Thereafter, the terminal condensation (C7) performs macrocyclization of the NRPS product and the cyclic scaffold is released from ecdA. All six of the amino acid residues are hydroxylated, including 4R,5R-dihydroxy-L-ornithine, 4R-hydroxyl-L-proline, 3S,4S-dihydroxy-L-homotyrosine, and 3S-hydroxyl-4S-methyl-L-prolin. In the pathway, all the hydroxylation reactions are proposed to occur following completion of the cyclic peptide, so the unhydroxylated precursor produced by ecdA will undergo six rounds of hydroxylation. Five hydroxylase genes (ecdG, ecdH, ecdK, htyE and htyF) are embedded within the echinocandin B (ecd) and L-homotyrosine (hty) clusters. This chain is Nonribosomal peptide synthetase ecdA, found in Aspergillus rugulosus (Emericella rugulosa).